The primary structure comprises 472 residues: Probable low-salt glycan biosynthesis flippase Agl15 (472 aa).

The next 13 helical transmembrane spans lie at 8 to 28 (IKLF…ITFF), 38 to 58 (GVFF…DFGL), 77 to 97 (SSAI…IVVF), 109 to 129 (FAVY…AVSV), 164 to 184 (AEAL…WGLS), 209 to 229 (VVSS…IGIF), 244 to 264 (VTAI…PQVS), 289 to 309 (LVIP…GIVF), 315 to 335 (IASY…VHVI), 354 to 374 (VISV…FGIV), 375 to 395 (GAAV…AHYL), 408 to 428 (IGWC…FKTL), and 434 to 454 (LIQL…ITLL).

The protein belongs to the AglR/Agl15 family.

The protein localises to the cell membrane. It functions in the pathway protein modification; protein glycosylation. Its pathway is cell surface structure biogenesis; S-layer biogenesis. In terms of biological role, flippase involved in N-glycan biosynthetic pathway that takes place under low-salt conditions (1.75 M instead of 3.4 M). Participates in the formation of the tetrasaccharide present at 'Asn-532' of S-layer glycoprotein Csg, consisting of a sulfated hexose, 2 hexoses and rhamnose. Probably moves the tetrasaccharide from the cytosolic to the extracytosolic side of the membrane. The polypeptide is Probable low-salt glycan biosynthesis flippase Agl15 (agl15) (Haloferax volcanii (strain ATCC 29605 / DSM 3757 / JCM 8879 / NBRC 14742 / NCIMB 2012 / VKM B-1768 / DS2) (Halobacterium volcanii)).